A 274-amino-acid chain; its full sequence is Probable endonuclease LCL3 (274 aa).

Residues 15–32 (AVLSIILTGSTLTLIYTY) form a helical membrane-spanning segment. Positions 53–261 (HWLYGKVTSV…RSRKKGLWIQ (209 aa)) constitute a TNase-like domain. Arginine 151 is an active-site residue. Aspartate 156 serves as a coordination point for Ca(2+). Active-site residues include glutamate 159 and arginine 199.

Belongs to the LCL3 family.

The protein localises to the mitochondrion. Its subcellular location is the membrane. The protein is Probable endonuclease LCL3 (LCL3) of Saccharomyces cerevisiae (strain Lalvin EC1118 / Prise de mousse) (Baker's yeast).